Here is a 526-residue protein sequence, read N- to C-terminus: Glucose-6-phosphate isomerase (526 aa).

Glu320 (proton donor) is an active-site residue. Active-site residues include His349 and Lys453.

Belongs to the GPI family.

It localises to the cytoplasm. The catalysed reaction is alpha-D-glucose 6-phosphate = beta-D-fructose 6-phosphate. The protein operates within carbohydrate biosynthesis; gluconeogenesis. It participates in carbohydrate degradation; glycolysis; D-glyceraldehyde 3-phosphate and glycerone phosphate from D-glucose: step 2/4. Functionally, catalyzes the reversible isomerization of glucose-6-phosphate to fructose-6-phosphate. This chain is Glucose-6-phosphate isomerase, found in Gloeothece citriformis (strain PCC 7424) (Cyanothece sp. (strain PCC 7424)).